A 259-amino-acid chain; its full sequence is Flagellar L-ring protein (259 aa).

The N-terminal stretch at 1-15 is a signal peptide; the sequence is MKRISLIALVTLMSG. Cys16 is lipidated: N-palmitoyl cysteine. The S-diacylglycerol cysteine moiety is linked to residue Cys16.

Belongs to the FlgH family. As to quaternary structure, the basal body constitutes a major portion of the flagellar organelle and consists of four rings (L,P,S, and M) mounted on a central rod.

It is found in the cell outer membrane. The protein resides in the bacterial flagellum basal body. Its function is as follows. Assembles around the rod to form the L-ring and probably protects the motor/basal body from shearing forces during rotation. The protein is Flagellar L-ring protein of Vibrio vulnificus (strain YJ016).